Here is a 263-residue protein sequence, read N- to C-terminus: Type II restriction enzyme TthHB8I (263 aa).

The enzyme catalyses Endonucleolytic cleavage of DNA to give specific double-stranded fragments with terminal 5'-phosphates.. Functionally, a P subtype restriction enzyme that recognizes the double-stranded sequence 5'-TCGA-3' and cleaves after T-1. This Thermus thermophilus (strain ATCC 27634 / DSM 579 / HB8) protein is Type II restriction enzyme TthHB8I (tthHB8IR).